The following is a 220-amino-acid chain: Ribosomal RNA small subunit methyltransferase J (220 aa).

S-adenosyl-L-methionine contacts are provided by residues 55-56, 71-72, and Asp123; these read RD and ER.

Belongs to the methyltransferase superfamily. RsmJ family.

Its subcellular location is the cytoplasm. It catalyses the reaction guanosine(1516) in 16S rRNA + S-adenosyl-L-methionine = N(2)-methylguanosine(1516) in 16S rRNA + S-adenosyl-L-homocysteine + H(+). Specifically methylates the guanosine in position 1516 of 16S rRNA. The protein is Ribosomal RNA small subunit methyltransferase J of Rhodopseudomonas palustris (strain BisB5).